Consider the following 308-residue polypeptide: Glucan 1,3-beta-glucosidase (308 aa).

The signal sequence occupies residues 1–18; that stretch reads MQIKFLTTLATVLTSVAA. The Proton donor role is filled by Glu119. A glycan (N-linked (GlcNAc...) asparagine) is linked at Asn197. Glu228 serves as the catalytic Nucleophile.

It belongs to the glycosyl hydrolase 17 family.

The protein localises to the secreted. The protein resides in the cell wall. It catalyses the reaction Successive hydrolysis of beta-D-glucose units from the non-reducing ends of (1-&gt;3)-beta-D-glucans, releasing alpha-glucose.. This chain is Glucan 1,3-beta-glucosidase (BGL2), found in Candida albicans (Yeast).